A 201-amino-acid chain; its full sequence is Orotate phosphoribosyltransferase (201 aa).

Glu-113–Ser-121 is a binding site for 5-phospho-alpha-D-ribose 1-diphosphate. Residues Thr-117 and Arg-145 each contribute to the orotate site.

It belongs to the purine/pyrimidine phosphoribosyltransferase family. PyrE subfamily. In terms of assembly, homodimer. Mg(2+) is required as a cofactor.

It carries out the reaction orotidine 5'-phosphate + diphosphate = orotate + 5-phospho-alpha-D-ribose 1-diphosphate. Its pathway is pyrimidine metabolism; UMP biosynthesis via de novo pathway; UMP from orotate: step 1/2. Catalyzes the transfer of a ribosyl phosphate group from 5-phosphoribose 1-diphosphate to orotate, leading to the formation of orotidine monophosphate (OMP). The chain is Orotate phosphoribosyltransferase from Helicobacter pylori (strain P12).